Consider the following 518-residue polypeptide: Cytochrome P450 monooxygenase ARMGADRAFT_1018417 (518 aa).

Residues 3–23 (LFSAYALAFSLLMIPLILYIL) form a helical membrane-spanning segment. Residue Cys-433 coordinates heme. Asn-455 carries an N-linked (GlcNAc...) asparagine glycan.

The protein belongs to the cytochrome P450 family. It depends on heme as a cofactor.

The protein localises to the membrane. It participates in secondary metabolite biosynthesis. In terms of biological role, cytochrome P450 monooxygenase, part of the gene cluster that mediates the biosynthesis of melleolides, a range of antifungal and phytotoxic polyketide derivatives composed of an orsellinic acid (OA) moiety esterified to various sesquiterpene alcohols. The first step in melleolides biosynthesis is performed by the delta(6)-protoilludene synthase PRO1 which catalyzes the cyclization of farnesyl diphosphate to protoilludene. The orsellinic acid synthase armB produces OA by condensing acetyl-CoA with 3 malonyl-CoA units in a three-round chain elongation reaction folowed by a C2-C7 ring closure. ArmB further catalyzes the trans-esterification of OA to the various sesquiterpene alcohols resulting from the hydroxylation of protoilludene. The melleolides cluster also includes 5 cytochrome P450 monooxygenases, 4 NAD(+)-dependent oxidoreductases, one flavin-dependent oxidoreductase, and one O-methyltransferase. The cytochrome P450 monooxygenases may be involved in protoilludene hydroxylation to elaborate melleolides with multiple alcohol groups, such as melleolide D, which carries alcohol functionalities at C-4, C-5, C-10, and C-13. The role of the NAD(+)-dependent enzymes remains unknown. Numerous melleolides, including arnamial, show 5'-O-methylation of the aromatic moiety which may be catalyzed by the methyltransferase encoded in the cluster. The flavin-dependent oxidoreductase might represent the dehydrogenase yielding the aldehyde in position 1 of arnamial and other melleolides. Finally, several halogenase localized outside of the cluster, are able to catalyze the transfer of a single chlorine atom to the melleolide backbone, resulting in a 6'-chloromelleolide product. The protein is Cytochrome P450 monooxygenase ARMGADRAFT_1018417 of Armillaria gallica (Bulbous honey fungus).